A 259-amino-acid polypeptide reads, in one-letter code: Phosphate import ATP-binding protein PstB (259 aa).

Residues 10 to 254 form the ABC transporter domain; sequence AESRNLSFYY…PSRKETEDYI (245 aa). 43 to 50 provides a ligand contact to ATP; it reads GPSGCGKS.

This sequence belongs to the ABC transporter superfamily. Phosphate importer (TC 3.A.1.7) family. The complex is composed of two ATP-binding proteins (PstB), two transmembrane proteins (PstC and PstA) and a solute-binding protein (PstS).

Its subcellular location is the cell inner membrane. The catalysed reaction is phosphate(out) + ATP + H2O = ADP + 2 phosphate(in) + H(+). Its function is as follows. Part of the ABC transporter complex PstSACB involved in phosphate import. Responsible for energy coupling to the transport system. The polypeptide is Phosphate import ATP-binding protein PstB (Methylobacillus flagellatus (strain ATCC 51484 / DSM 6875 / VKM B-1610 / KT)).